The following is a 205-amino-acid chain: NADH-quinone oxidoreductase subunit C (205 aa).

This sequence belongs to the complex I 30 kDa subunit family. NDH-1 is composed of 14 different subunits. Subunits NuoB, C, D, E, F, and G constitute the peripheral sector of the complex.

The protein resides in the cell inner membrane. The enzyme catalyses a quinone + NADH + 5 H(+)(in) = a quinol + NAD(+) + 4 H(+)(out). In terms of biological role, NDH-1 shuttles electrons from NADH, via FMN and iron-sulfur (Fe-S) centers, to quinones in the respiratory chain. The immediate electron acceptor for the enzyme in this species is believed to be ubiquinone. Couples the redox reaction to proton translocation (for every two electrons transferred, four hydrogen ions are translocated across the cytoplasmic membrane), and thus conserves the redox energy in a proton gradient. The protein is NADH-quinone oxidoreductase subunit C of Bartonella bacilliformis (strain ATCC 35685 / KC583 / Herrer 020/F12,63).